The primary structure comprises 95 residues: MIRSELIAKIAEENPHLFQRDVEKIVNTIFEEIIEAMARGDRVELRGFGAFSVKKRDARTGRNPRTGTSVAVDEKHVPFFKTGKLLRDRLNGGEE.

This sequence belongs to the bacterial histone-like protein family. In terms of assembly, heterodimer of an alpha and a beta chain.

Functionally, this protein is one of the two subunits of integration host factor, a specific DNA-binding protein that functions in genetic recombination as well as in transcriptional and translational control. Involved in hydrogenase gene expression. This chain is Integration host factor subunit beta (ihfB), found in Rhodobacter capsulatus (Rhodopseudomonas capsulata).